The primary structure comprises 203 residues: Urease accessory protein UreG (203 aa).

Position 11–18 (11–18 (GPVGSGKT)) interacts with GTP.

The protein belongs to the SIMIBI class G3E GTPase family. UreG subfamily. As to quaternary structure, homodimer. UreD, UreF and UreG form a complex that acts as a GTP-hydrolysis-dependent molecular chaperone, activating the urease apoprotein by helping to assemble the nickel containing metallocenter of UreC. The UreE protein probably delivers the nickel.

The protein localises to the cytoplasm. Facilitates the functional incorporation of the urease nickel metallocenter. This process requires GTP hydrolysis, probably effectuated by UreG. This chain is Urease accessory protein UreG, found in Prochlorococcus marinus (strain MIT 9312).